The following is a 1148-amino-acid chain: Phospholipid-transporting ATPase IB (1148 aa).

The Cytoplasmic portion of the chain corresponds to 1–44 (MSRATSVGDQLEAPARIIYLNQSHLNKFCDNRISTAKYSVLTFL). Phosphothreonine is present on threonine 5. A helical membrane pass occupies residues 45–66 (PRFLYEQIRRAANAFFLFIALL). The Exoplasmic loop segment spans residues 67-71 (QQIPD). A helical transmembrane segment spans residues 72-94 (VSPTGRYTTLVPLVIILTIAGIK). Residues 95 to 276 (EIIEDFKRHK…SNVEKVTNVQ (182 aa)) are Cytoplasmic-facing. Residues 277 to 298 (ILVLFGILLVMALVSSVGALFW) traverse the membrane as a helical segment. At 299-323 (NGSHGGKSWYIKKMDTNSDNFGYNL) the chain is on the exoplasmic loop side. The helical transmembrane segment at 324 to 345 (LTFIILYNNLIPISLLVTLEVV) threads the bilayer. Over 346 to 837 (KYTQALFINW…GAWSYNRVTK (492 aa)) the chain is Cytoplasmic. Aspartate 388 functions as the 4-aspartylphosphate intermediate in the catalytic mechanism. Residues aspartate 388, lysine 389, threonine 390, glutamate 488, phenylalanine 529, lysine 552, arginine 585, threonine 665, glycine 666, aspartate 667, arginine 755, and lysine 761 each contribute to the ATP site. Aspartate 388 contacts Mg(2+). Threonine 390 contributes to the Mg(2+) binding site. Position 781 (aspartate 781) interacts with Mg(2+). Positions 784 and 785 each coordinate ATP. Aspartate 785 lines the Mg(2+) pocket. The chain crosses the membrane as a helical span at residues 838 to 858 (CILYCFYKNVVLYIIELWFAF). Over 859-870 (VNGFSGQILFER) the chain is Exoplasmic loop. A helical membrane pass occupies residues 871-890 (WCIGLYNVIFTALPPFTLGI). Over 891–920 (FERSCTQESMLRFPQLYRITQNAEGFNTKV) the chain is Cytoplasmic. Residues 921–942 (FWGHCINALVHSLILFWVPMKA) traverse the membrane as a helical segment. Topologically, residues 943-956 (LEHDTPVTSGHATD) are exoplasmic loop. Residues 957–979 (YLFVGNIVYTYVVVTVCLKAGLE) traverse the membrane as a helical segment. Over 980 to 985 (TTAWTK) the chain is Cytoplasmic. A helical membrane pass occupies residues 986-1006 (FSHLAVWGSMLIWLVFFGVYS). Residues 1007-1024 (TIWPTIPIAPDMKGQATM) are Exoplasmic loop-facing. Residues 1025–1049 (VLSSAYFWLGLFLVPTACLIEDVAW) traverse the membrane as a helical segment. Residues 1050 to 1148 (RAAKHTCKKT…DTTKENSRKK (99 aa)) are Cytoplasmic-facing.

This sequence belongs to the cation transport ATPase (P-type) (TC 3.A.3) family. Type IV subfamily. In terms of assembly, component of a P4-ATPase flippase complex which consists of a catalytic alpha subunit and an accessory beta subunit. Interacts with TMEM30A to form a flippase complex. It depends on Mg(2+) as a cofactor. Found in testis, heart and brain. Most abundant in testis. Also detected in fetal tissues. Expressed in retinal photoreceptor cells; detected in retina outer nuclear layer and inner segment (at protein level).

The protein resides in the membrane. It localises to the golgi apparatus membrane. The protein localises to the endosome membrane. It is found in the cell membrane. Its subcellular location is the photoreceptor outer segment membrane. The protein resides in the photoreceptor inner segment membrane. The catalysed reaction is ATP + H2O + phospholipidSide 1 = ADP + phosphate + phospholipidSide 2.. The enzyme catalyses a 1,2-diacyl-sn-glycero-3-phospho-L-serine(out) + ATP + H2O = a 1,2-diacyl-sn-glycero-3-phospho-L-serine(in) + ADP + phosphate + H(+). It carries out the reaction a 1,2-diacyl-sn-glycero-3-phosphoethanolamine(in) + ATP + H2O = a 1,2-diacyl-sn-glycero-3-phosphoethanolamine(out) + ADP + phosphate + H(+). In terms of biological role, catalytic component of a P4-ATPase flippase complex which catalyzes the hydrolysis of ATP coupled to the transport of aminophospholipids from the outer to the inner leaflet of various membranes and ensures the maintenance of asymmetric distribution of phospholipids. Able to translocate phosphatidylserine, but not phosphatidylcholine. Phospholipid translocation also seems to be implicated in vesicle formation and in uptake of lipid signaling molecules. Reconstituted to liposomes, the ATP8A2:TMEM30A flippase complex predominantly transports phosphatidylserine (PS) and to a lesser extent phosphatidylethanolamine (PE). Phospholipid translocation is not associated with a countertransport of an inorganic ion or other charged substrate from the cytoplasmic side toward the exoplasm in connection with the phosphorylation from ATP. ATP8A2:TMEM30A may be involved in regulation of neurite outgrowth. Proposed to function in the generation and maintenance of phospholipid asymmetry in photoreceptor disk membranes and neuronal axon membranes. May be involved in vesicle trafficking in neuronal cells. Required for normal visual and auditory function; involved in photoreceptor and inner ear spiral ganglion cell survival. The chain is Phospholipid-transporting ATPase IB from Mus musculus (Mouse).